The chain runs to 1564 residues: Abnormal spindle-like microcephaly-associated protein homolog (1564 aa).

IQ domains are found at residues 31–60, 220–251, 270–299, 293–322, 366–395, 389–420, 439–468, 462–491, 512–541, 535–566, 608–639, 658–687, 681–712, 731–762, 754–785, 804–835, 827–856, 877–908, 900–931, 949–980, 972–1003, 1022–1053, 1045–1076, 1095–1126, 1168–1199, 1304–1333, 1327–1358, 1377–1406, 1452–1483, 1474–1503, and 1500–1531; these read YLWATVTIQRHWRAYLRRKQDQQRYEMLKS, LKKNIIKLQAHVRKHQQLQKYKKIKKAAVIIQ, TRSAVIVLQSAYRGMQARKMYIHILTSVIK, ILTSVIKIQSYYRAYVSKKEFLSLKNATIK, MRESCIKLQAFVRGYLVRKQIRLQRKAVIS, QRKAVISLQSYFRMRKARQYYLKMYKAVIIIQ, VKKAATCLQAAYRGYKVRQLIKQQSVAAVK, QSVAAVKIQSAFRGYSKRVKYLSVLQSIIK, AKAAVISLQSAYRGWKVRKQIRREHQAAMK, EHQAAMKIQSAFRMAKAQKQFRLFKTAALVIQ, QHTCAVIIQSYYRMHVQQKKWKIMKEAALLIQ, TKAAVLTLQSAYRGMKVRKRIKACNTAAIT, CNTAAITIQSKYRAYKTKKKYAAYRASAIIIQ, LKKTAIKIQAVYRGIRVRRHIQHMHRAATFIK, MHRAATFIKAMFKMHQPRIRYHTMRKATIVIQ, ILKAVNILQANFRGVRVRRTLRKLRIAATLIQ, LRIAATLIQSNYRRYRQQTYFNKLKKITRT, LRHSVIYIQALFRGMKARRHLKTMHIAATLIQ, MHIAATLIQRRFRALMLRRRFLSLKKTAIWIQ, LQNAAIKIQSSYRRWMIRKKMREMHRAAAFIQ, MHRAAAFIQATFRMHRVHMRYHALKQASVVIQ, QRYSAVILQAAFRGMKTRRHLKSMYFSAILIQ, MYFSAILIQSRFRSLLVRRRFISLKKAAIFIQ, LRKAAITIQSSYRRLMVKKKLQEMHRAAVLIQ, QWHSAVIIQAAYRGMKARQLLREKHKAAIIIQ, HTQAVICIQSYYRGFKVRRDIQNMHLAATR, MHLAATRIQSFYRMHRAKVHYQTKKTAIVIIQ, VQKSVRTIQAAFRGMKVRQKLKNIPKEKMA, QSRAAVTIQKAFRRMITRKLETQKCATLRIQS, QKCATLRIQSFLRMAVYRRRRANSVQQKRA, and QKRAAVTLQHYFRMWQTRKQFLLYRKAAVVLQ.

It localises to the cytoplasm. The protein localises to the nucleus. Probable role in mitotic spindle regulation and coordination of mitotic processes. May have a preferential role in regulating neurogenesis. This chain is Abnormal spindle-like microcephaly-associated protein homolog (ASPM), found in Ateles geoffroyi (Black-handed spider monkey).